The following is a 309-amino-acid chain: Glycine-rich RNA-binding protein 3, mitochondrial (309 aa).

The transit peptide at 1–37 (MAFLSKFGNILKQTTNKQLNAQVSLSSPSLFQAIRCM) directs the protein to the mitochondrion. The RRM domain maps to 40 to 118 (SKLFIGGMAY…RVVKVNYAND (79 aa)). The tract at residues 247 to 309 (FAGDSQFGGS…GEFEDVAKRA (63 aa)) is disordered. Over residues 258–273 (VGNSSQFGGDNTQFTA) the composition is skewed to polar residues.

The protein belongs to the GR-RBP family. As to quaternary structure, homodimer. Interacts with ORRM2 and MORF8/RIP1. Interacts with RBG5/ORRM4. Binds to RBG2/ORRM5.

The protein localises to the mitochondrion. Possibly has a role in RNA transcription or processing during stress. Involved in C-to-U editing of mitochondrial RNA. Functions as a minor mitochondrial editing factor. Controls 6 percent of the mitochondrial editing sites. This Arabidopsis thaliana (Mouse-ear cress) protein is Glycine-rich RNA-binding protein 3, mitochondrial.